The sequence spans 129 residues: Large ribosomal subunit protein bL19 (129 aa).

This sequence belongs to the bacterial ribosomal protein bL19 family.

In terms of biological role, this protein is located at the 30S-50S ribosomal subunit interface and may play a role in the structure and function of the aminoacyl-tRNA binding site. This is Large ribosomal subunit protein bL19 from Granulibacter bethesdensis (strain ATCC BAA-1260 / CGDNIH1).